The sequence spans 410 residues: Transcription factor E2F4 (410 aa).

Residues 1 to 20 (MAEAGPQAPPPPGTPSRHEK) form a disordered region. Residue A2 is modified to N-acetylalanine. Residues 16–85 (SRHEKSLGLL…KNSIQWKGVG (70 aa)) mediate DNA binding. The tract at residues 43–65 (LKLAADTLAVRQKRRIYDITNVL) is leucine-zipper. Residues 48 to 85 (DTLAVRQKRRIYDITNVLEGIGLIEKKSKNSIQWKGVG) carry the DEF box motif. Positions 86-181 (PGCNTREIAD…GLNGQKKYQI (96 aa)) are dimerization. Disordered regions lie at residues 203–258 (PPVA…GSTQ) and 303–341 (SALL…DPTG). Low complexity-rich tracts occupy residues 231-252 (PALA…TPTP) and 308-324 (SSSS…SSSS). Positions 334–410 (PIKADPTGVL…DLFDVPVLKL (77 aa)) are transactivation. Position 381 is a phosphoserine (S381). The HCFC1-binding-motif (HBM) motif lies at 386 to 389 (DHDY). Residues 387–404 (HDYIYNLDESEGVCDLFD) are interaction with RBL1 and RBL2.

Belongs to the E2F/DP family. As to quaternary structure, component of the DRTF1/E2F transcription factor complex. Binds cooperatively with TFDP1/Dp-1 to E2F sites. The E2F4/TFDP1 dimer interacts preferentially with pocket protein RBL1, which inhibits the E2F transactivation domain. Lower affinity interaction has been found with retinoblastoma protein RB1. Interacts with TRRAP, which probably mediates its interaction with histone acetyltransferase complexes, leading to transcription activation. Interacts with HCFC1. Component of the DREAM complex (also named LINC complex) at least composed of E2F4, E2F5, LIN9, LIN37, LIN52, LIN54, MYBL1, MYBL2, RBL1, RBL2, RBBP4, TFDP1 and TFDP2. The complex exists in quiescent cells where it represses cell cycle-dependent genes. It dissociates in S phase when LIN9, LIN37, LIN52 and LIN54 form a subcomplex that binds to MYBL2. Interacts with PML. Interacts with CEBPA (when phosphorylated). In terms of processing, differentially phosphorylated in vivo.

Its subcellular location is the nucleus. In terms of biological role, transcription activator that binds DNA cooperatively with DP proteins through the E2 recognition site, 5'-TTTC[CG]CGC-3' found in the promoter region of a number of genes whose products are involved in cell cycle regulation or in DNA replication. The DRTF1/E2F complex functions in the control of cell-cycle progression from G1 to S phase. E2F4 binds with high affinity to RBL1 and RBL2. In some instances can also bind RB1. Specifically required for multiciliate cell differentiation: together with MCIDAS and E2F5, binds and activate genes required for centriole biogenesis. In Mus musculus (Mouse), this protein is Transcription factor E2F4 (E2f4).